The sequence spans 122 residues: UPF0102 protein Ping_1176 (122 aa).

The protein belongs to the UPF0102 family.

The chain is UPF0102 protein Ping_1176 from Psychromonas ingrahamii (strain DSM 17664 / CCUG 51855 / 37).